A 365-amino-acid polypeptide reads, in one-letter code: RISC-loading complex subunit TARBP2 (365 aa).

Sufficient for interaction with PRKRA regions lie at residues 22–105 (MLAA…EPAL), 151–233 (SPQQ…DARD), and 286–365 (LGAL…AGSK). One can recognise a DRBM 1 domain in the interval 30–97 (TPISLLQEYG…AEVALKHLKG (68 aa)). At serine 151 the chain carries Phosphoserine. DRBM domains lie at 158–226 (NPVG…RVHT) and 292–360 (ACCS…YLRI). Residues 227-365 (VPLDARDGNE…QYLRIMAGSK (139 aa)) form a sufficient for interaction with DICER1 region.

It belongs to the TARBP2 family. As to quaternary structure, self-associates. Component of the RISC loading complex (RLC), or micro-RNA (miRNA) loading complex (miRLC), which is composed of DICER1, AGO2 and TARBP2. Note that the trimeric RLC/miRLC is also referred to as RISC. Interacts with EIF2AK2/PKR and inhibits its protein kinase activity. Interacts with DHX9. Interacts with DICER1 and PRKRA. Interacts with DICER1, AGO2, MOV10, EIF6 and RPL7A (60S ribosome subunit); they form a large RNA-induced silencing complex (RISC). Interacts with IRF7; this interaction prevents IRF7 phosphorylation and activation.

The protein localises to the cytoplasm. The protein resides in the perinuclear region. It localises to the nucleus. In terms of biological role, required for formation of the RNA induced silencing complex (RISC). Component of the RISC loading complex (RLC), also known as the micro-RNA (miRNA) loading complex (miRLC), which is composed of DICER1, AGO2 and TARBP2. Within the RLC/miRLC, DICER1 and TARBP2 are required to process precursor miRNAs (pre-miRNAs) to mature miRNAs and then load them onto AGO2. AGO2 bound to the mature miRNA constitutes the minimal RISC and may subsequently dissociate from DICER1 and TARBP2. May also play a role in the production of short interfering RNAs (siRNAs) from double-stranded RNA (dsRNA) by DICER1. Binds in vitro to the PRM1 3'-UTR. Seems to act as a repressor of translation. For some pre-miRNA substrates, may also alter the choice of cleavage site by DICER1. Negatively regulates IRF7-mediated IFN-beta signaling triggered by viral infection by inhibiting the phosphorylation of IRF7 and promoting its 'Lys'-48-linked ubiquitination and degradation. This is RISC-loading complex subunit TARBP2 (Tarbp2) from Mus musculus (Mouse).